A 454-amino-acid polypeptide reads, in one-letter code: MREIVNLQAGQCGNQIGAKFWEIISEEHGIDSNGIYVGDSDLQLERVSVYYNEASAVTRSSGGKYVPRAILLDLEPGTMESVRSGPYGQLFRPDNFVYGQSGAGNNWAKGHYTEGAELVDNVLDVVRKECENCDCLQGFQLTHSLGGGTGSGMGTLLISKIREEYPDRIMNTYSVVPSPKVSDTVVEPYNATLSIHQLVENTDETYCIDNEALYDICFRTLKVSNPSYGDLNHLVSLTMSGVTTCLRFPGQLNADLRKLAVNMVPFPRLHFFMPGFAPLTSRGSQQYRALTVPELTQQMFDAKNMMAACDPRHGRYLTVAAVFRGRMSMKEVDEQMLAVQNKNSSYFVEWIPNNVKTAVCDIPPKGLKMSSTFIGNTTAIQELFKRISEQFSAMFRRKAFLHWYTGEGMDEMEFTEAESNMNDLVSEYQQYQEATADDEFDPEVNQEEVEGDCI.

Residues Gln-11, Glu-75, Ser-144, Gly-148, Thr-149, Gly-150, Asn-210, and Asn-232 each coordinate GTP. Glu-75 is a Mg(2+) binding site. The interval 435–454 is disordered; it reads TADDEFDPEVNQEEVEGDCI.

Belongs to the tubulin family. In terms of assembly, dimer of alpha and beta chains. A typical microtubule is a hollow water-filled tube with an outer diameter of 25 nm and an inner diameter of 15 nM. Alpha-beta heterodimers associate head-to-tail to form protofilaments running lengthwise along the microtubule wall with the beta-tubulin subunit facing the microtubule plus end conferring a structural polarity. Microtubules usually have 13 protofilaments but different protofilament numbers can be found in some organisms and specialized cells. Mg(2+) is required as a cofactor.

It localises to the cytoplasm. It is found in the cytoskeleton. Its function is as follows. Tubulin is the major constituent of microtubules, a cylinder consisting of laterally associated linear protofilaments composed of alpha- and beta-tubulin heterodimers. Microtubules grow by the addition of GTP-tubulin dimers to the microtubule end, where a stabilizing cap forms. Below the cap, tubulin dimers are in GDP-bound state, owing to GTPase activity of alpha-tubulin. This chain is Tubulin beta-3 chain (betaTub60D), found in Drosophila melanogaster (Fruit fly).